We begin with the raw amino-acid sequence, 894 residues long: Glutamate receptor 3 (894 aa).

The N-terminal stretch at 1–28 (MARQKKMGQSVLRAVFFLVLGLLGHSHG) is a signal peptide. Residues 29–552 (GFPNTISIGG…GVFSFLDPLA (524 aa)) lie on the Extracellular side of the membrane. N-linked (GlcNAc...) asparagine glycans are attached at residues N63, N266, N380, N415, and N422. Cysteines 91 and 340 form a disulfide. L-glutamate is bound by residues P508, T510, and R515. The chain crosses the membrane as a helical span at residues 553–573 (YEIWMCIVFAYIGVSVVLFLV). Over 574-602 (SRFSPYEWHLEDNNEEPRDPQSPPDPPNE) the chain is Cytoplasmic. Positions 603 to 618 (FGIFNSLWFSLGAFMQ) form an intramembrane region, helical; Pore-forming. The stretch at 619–621 (QGC) is an intramembrane region. The S-palmitoyl cysteine moiety is linked to residue C621. Residues 622 to 627 (DISPRS) lie on the Cytoplasmic side of the membrane. Residues 628–648 (LSGRIVGGVWWFFTLIIISSY) form a helical membrane-spanning segment. Residues 649 to 823 (TANLAAFLTV…DKTSALSLSN (175 aa)) lie on the Extracellular side of the membrane. L-glutamate-binding residues include S686, T687, and E737. A disulfide bridge links C750 with C805. A helical transmembrane segment spans residues 824–844 (VAGVFYILVGGLGLAMMVALI). The Cytoplasmic segment spans residues 845-894 (EFCYKSRAESKRMKLTKNTQNFKPAPATNTQNYATYREGYNVYGTESVKI). C847 carries S-palmitoyl cysteine lipidation. Phosphotyrosine occurs at positions 877 and 887.

It belongs to the glutamate-gated ion channel (TC 1.A.10.1) family. GRIA3 subfamily. As to quaternary structure, homotetramer or heterotetramer of pore-forming glutamate receptor subunits. Tetramers may be formed by the dimerization of dimers. Interacts with PICK1, GRIP1 and GRIP2. Found in a complex with GRIA1, GRIA2, GRIA4, CNIH2, CNIH3, CACNG2, CACNG3, CACNG4, CACNG5, CACNG7 and CACNG8. Interacts with CACNG5. Found in a complex with GRIA1, GRIA2, GRIA4, DLG4, CACNG8 and CNIH2.

Its subcellular location is the cell membrane. It is found in the postsynaptic cell membrane. The protein resides in the postsynaptic density membrane. The catalysed reaction is Ca(2+)(in) = Ca(2+)(out). Functionally, ionotropic glutamate receptor that functions as a ligand-gated cation channel, gated by L-glutamate and glutamatergic agonists such as alpha-amino-3-hydroxy-5-methyl-4-isoxazolepropionic acid (AMPA), quisqualic acid, and kainic acid. L-glutamate acts as an excitatory neurotransmitter at many synapses in the central nervous system and plays an important role in fast excitatory synaptic transmission by inducing long-term potentiation. Binding of the excitatory neurotransmitter L-glutamate induces a conformation change, leading to the opening of the cation channel, and thereby converts the chemical signal to an electrical impulse upon entry of calcium. The receptor then desensitizes rapidly and enters a transient inactive state, characterized by the presence of bound agonist. In the presence of CACNG8, shows resensitization which is characterized by a delayed accumulation of current flux upon continued application of glutamate. The protein is Glutamate receptor 3 of Homo sapiens (Human).